The chain runs to 218 residues: Peptidyl-tRNA hydrolase (218 aa).

Y19 contacts tRNA. Catalysis depends on H24, which acts as the Proton acceptor. 3 residues coordinate tRNA: Y68, N70, and N116. A disordered region spans residues 181-218; it reads WNTATQRLNARPAPPKPPKAPKAPQPAAADQPKDESQP. Pro residues predominate over residues 192-204; sequence PAPPKPPKAPKAP.

This sequence belongs to the PTH family. In terms of assembly, monomer.

The protein localises to the cytoplasm. It catalyses the reaction an N-acyl-L-alpha-aminoacyl-tRNA + H2O = an N-acyl-L-amino acid + a tRNA + H(+). In terms of biological role, hydrolyzes ribosome-free peptidyl-tRNAs (with 1 or more amino acids incorporated), which drop off the ribosome during protein synthesis, or as a result of ribosome stalling. Its function is as follows. Catalyzes the release of premature peptidyl moieties from peptidyl-tRNA molecules trapped in stalled 50S ribosomal subunits, and thus maintains levels of free tRNAs and 50S ribosomes. This chain is Peptidyl-tRNA hydrolase, found in Azoarcus sp. (strain BH72).